Here is a 333-residue protein sequence, read N- to C-terminus: Zinc-type alcohol dehydrogenase-like protein SACOL2177 (333 aa).

This sequence belongs to the zinc-containing alcohol dehydrogenase family. Quinone oxidoreductase subfamily.

This is Zinc-type alcohol dehydrogenase-like protein SACOL2177 from Staphylococcus aureus (strain COL).